Consider the following 123-residue polypeptide: Large ribosomal subunit protein bL17 (123 aa).

This sequence belongs to the bacterial ribosomal protein bL17 family. In terms of assembly, part of the 50S ribosomal subunit. Contacts protein L32.

The sequence is that of Large ribosomal subunit protein bL17 from Borrelia garinii subsp. bavariensis (strain ATCC BAA-2496 / DSM 23469 / PBi) (Borreliella bavariensis).